A 356-amino-acid polypeptide reads, in one-letter code: 3-dehydroquinate synthase (356 aa).

NAD(+) contacts are provided by residues 69–74 (DGEQYK), 103–107 (GVVGD), 127–128 (TT), K140, and K149. Zn(2+) contacts are provided by E182, H245, and H262.

Belongs to the sugar phosphate cyclases superfamily. Dehydroquinate synthase family. The cofactor is Co(2+). It depends on Zn(2+) as a cofactor. Requires NAD(+) as cofactor.

The protein resides in the cytoplasm. It catalyses the reaction 7-phospho-2-dehydro-3-deoxy-D-arabino-heptonate = 3-dehydroquinate + phosphate. The protein operates within metabolic intermediate biosynthesis; chorismate biosynthesis; chorismate from D-erythrose 4-phosphate and phosphoenolpyruvate: step 2/7. Functionally, catalyzes the conversion of 3-deoxy-D-arabino-heptulosonate 7-phosphate (DAHP) to dehydroquinate (DHQ). This is 3-dehydroquinate synthase from Pseudoalteromonas translucida (strain TAC 125).